The chain runs to 847 residues: Nitrite reductase (NADH) large subunit (847 aa).

Residue 44-79 participates in FAD binding; that stretch reads YDRVHLSSYFSHHTAEELSLVREGFYEKHGIKVLVG. 193-225 serves as a coordination point for NAD(+); the sequence is LRRKIESMGVRVHTSKNTLEIVQEGVEARKTMR. Residues Cys425, Cys427, Cys459, and Cys462 each coordinate [2Fe-2S] cluster. Cys641, Cys647, Cys681, and Cys685 together coordinate [4Fe-4S] cluster. Cys685 is a binding site for siroheme.

The protein belongs to the nitrite and sulfite reductase 4Fe-4S domain family. As to quaternary structure, homodimer which associates with NirD. Siroheme serves as cofactor. It depends on [2Fe-2S] cluster as a cofactor. [4Fe-4S] cluster is required as a cofactor. The cofactor is FAD.

It carries out the reaction NH4(+) + 3 NAD(+) + 2 H2O = nitrite + 3 NADH + 5 H(+). Its pathway is nitrogen metabolism; nitrate reduction (assimilation). The protein is Nitrite reductase (NADH) large subunit (nirB) of Escherichia coli (strain K12).